Consider the following 615-residue polypeptide: Chaperone protein HtpG (615 aa).

The segment at 1-335 is a; substrate-binding; the sequence is MSAEKQTHGF…APDLPLNVSR (335 aa). A b region spans residues 336 to 541; sequence ELLQDYGPVQ…EDQLGPQMRR (206 aa). The c stretch occupies residues 542–615; sequence MLEAAGQPVP…RMQALLSQSV (74 aa).

This sequence belongs to the heat shock protein 90 family. In terms of assembly, homodimer.

It localises to the cytoplasm. Functionally, molecular chaperone. Has ATPase activity. The polypeptide is Chaperone protein HtpG (Alcanivorax borkumensis (strain ATCC 700651 / DSM 11573 / NCIMB 13689 / SK2)).